A 208-amino-acid polypeptide reads, in one-letter code: Small ribosomal subunit protein eS8 (208 aa).

The tract at residues 1–40 (MGISRDNWHKRRKTGGKRKPVHKKRKYELGRPPSNTKLGP) is disordered. Residues 8 to 26 (WHKRRKTGGKRKPVHKKRK) are compositionally biased toward basic residues.

It belongs to the eukaryotic ribosomal protein eS8 family. As to quaternary structure, component of the small ribosomal subunit.

The protein resides in the cytoplasm. Its function is as follows. Component of the small ribosomal subunit. The ribosome is a large ribonucleoprotein complex responsible for the synthesis of proteins in the cell. The polypeptide is Small ribosomal subunit protein eS8 (rps8) (Ictalurus punctatus (Channel catfish)).